A 301-amino-acid polypeptide reads, in one-letter code: Probable alpha-L-glutamate ligase (301 aa).

The ATP-grasp domain occupies 104 to 287 (LQLLSRRGIG…VAGMIIEHLE (184 aa)). Residues Lys-141, 178-179 (EY), Asp-187, and 211-213 (RSN) each bind ATP. Mg(2+) is bound by residues Asp-248, Glu-260, and Asn-262. 3 residues coordinate Mn(2+): Asp-248, Glu-260, and Asn-262.

The protein belongs to the RimK family. It depends on Mg(2+) as a cofactor. The cofactor is Mn(2+).

This is Probable alpha-L-glutamate ligase from Pseudomonas putida (strain GB-1).